Consider the following 320-residue polypeptide: uncharacterized protein (320 aa).

The N-terminal stretch at 1–23 is a signal peptide; it reads MKLNLRFPSYFLPVVAASAFLVS. The N-palmitoyl cysteine moiety is linked to residue C24. Residue C24 is the site of S-diacylglycerol cysteine attachment. The segment at 160–181 is disordered; sequence KNHEHGHTHKNGETHEHDHDHH.

Its subcellular location is the cell membrane. This is an uncharacterized protein from Mycoplasma pneumoniae (strain ATCC 29342 / M129 / Subtype 1) (Mycoplasmoides pneumoniae).